A 616-amino-acid polypeptide reads, in one-letter code: Proline--tRNA ligase (616 aa).

The protein belongs to the class-II aminoacyl-tRNA synthetase family. ProS type 1 subfamily. Homodimer.

The protein localises to the cytoplasm. The enzyme catalyses tRNA(Pro) + L-proline + ATP = L-prolyl-tRNA(Pro) + AMP + diphosphate. Its function is as follows. Catalyzes the attachment of proline to tRNA(Pro) in a two-step reaction: proline is first activated by ATP to form Pro-AMP and then transferred to the acceptor end of tRNA(Pro). As ProRS can inadvertently accommodate and process non-cognate amino acids such as alanine and cysteine, to avoid such errors it has two additional distinct editing activities against alanine. One activity is designated as 'pretransfer' editing and involves the tRNA(Pro)-independent hydrolysis of activated Ala-AMP. The other activity is designated 'posttransfer' editing and involves deacylation of mischarged Ala-tRNA(Pro). The misacylated Cys-tRNA(Pro) is not edited by ProRS. In Streptococcus mutans serotype c (strain ATCC 700610 / UA159), this protein is Proline--tRNA ligase.